Here is a 327-residue protein sequence, read N- to C-terminus: Undecaprenyl-phosphate 4-deoxy-4-formamido-L-arabinose transferase (327 aa).

Transmembrane regions (helical) follow at residues 236–256 (LSLV…LLVV) and 270–290 (VFTL…GMGL).

It belongs to the glycosyltransferase 2 family.

The protein resides in the cell inner membrane. It carries out the reaction UDP-4-deoxy-4-formamido-beta-L-arabinose + di-trans,octa-cis-undecaprenyl phosphate = 4-deoxy-4-formamido-alpha-L-arabinopyranosyl di-trans,octa-cis-undecaprenyl phosphate + UDP. Its pathway is glycolipid biosynthesis; 4-amino-4-deoxy-alpha-L-arabinose undecaprenyl phosphate biosynthesis; 4-amino-4-deoxy-alpha-L-arabinose undecaprenyl phosphate from UDP-4-deoxy-4-formamido-beta-L-arabinose and undecaprenyl phosphate: step 1/2. It functions in the pathway bacterial outer membrane biogenesis; lipopolysaccharide biosynthesis. In terms of biological role, catalyzes the transfer of 4-deoxy-4-formamido-L-arabinose from UDP to undecaprenyl phosphate. The modified arabinose is attached to lipid A and is required for resistance to polymyxin and cationic antimicrobial peptides. The polypeptide is Undecaprenyl-phosphate 4-deoxy-4-formamido-L-arabinose transferase (Yersinia enterocolitica serotype O:8 / biotype 1B (strain NCTC 13174 / 8081)).